Consider the following 330-residue polypeptide: Glycerol-3-phosphate dehydrogenase [NAD(P)+] 1 (330 aa).

NADPH is bound by residues tryptophan 15, arginine 35, and lysine 105. Positions 105, 133, and 135 each coordinate sn-glycerol 3-phosphate. An NADPH-binding site is contributed by alanine 137. Sn-glycerol 3-phosphate contacts are provided by lysine 188, aspartate 241, serine 251, arginine 252, and asparagine 253. Lysine 188 serves as the catalytic Proton acceptor. Arginine 252 is an NADPH binding site. 2 residues coordinate NADPH: isoleucine 276 and glutamate 278.

This sequence belongs to the NAD-dependent glycerol-3-phosphate dehydrogenase family.

It is found in the cytoplasm. It catalyses the reaction sn-glycerol 3-phosphate + NAD(+) = dihydroxyacetone phosphate + NADH + H(+). The enzyme catalyses sn-glycerol 3-phosphate + NADP(+) = dihydroxyacetone phosphate + NADPH + H(+). It participates in membrane lipid metabolism; glycerophospholipid metabolism. Functionally, catalyzes the reduction of the glycolytic intermediate dihydroxyacetone phosphate (DHAP) to sn-glycerol 3-phosphate (G3P), the key precursor for phospholipid synthesis. In Sphingopyxis alaskensis (strain DSM 13593 / LMG 18877 / RB2256) (Sphingomonas alaskensis), this protein is Glycerol-3-phosphate dehydrogenase [NAD(P)+] 1.